A 761-amino-acid polypeptide reads, in one-letter code: Probable beta-galactosidase 2 (761 aa).

Residues 1–23 (MGTIKNNFQLLWLILLIVVLVNG) form the signal peptide. N-linked (GlcNAc...) asparagine glycans are attached at residues N39 and N110. E195 (proton donor) is an active-site residue. A glycan (N-linked (GlcNAc...) asparagine) is linked at N206. E267 functions as the Nucleophile in the catalytic mechanism. 11 N-linked (GlcNAc...) asparagine glycosylation sites follow: N385, N405, N438, N501, N552, N553, N577, N592, N642, N690, and N696.

The protein belongs to the glycosyl hydrolase 35 family.

The enzyme catalyses Hydrolysis of terminal non-reducing beta-D-galactose residues in beta-D-galactosides.. Cleaves beta-linked terminal galactosyl residues from gangliosides, glycoproteins, and glycosaminoglycans. This Dictyostelium discoideum (Social amoeba) protein is Probable beta-galactosidase 2 (glb2).